Reading from the N-terminus, the 106-residue chain is Large ribosomal subunit protein eL42 (106 aa).

Positions 26-53 are disordered; that stretch reads YKKGKDSLYAQGKRRYDRKQSGYGGQTK.

This sequence belongs to the eukaryotic ribosomal protein eL42 family. In terms of assembly, component of the large ribosomal subunit.

It is found in the cytoplasm. Component of the large ribosomal subunit. The ribosome is a large ribonucleoprotein complex responsible for the synthesis of proteins in the cell. The polypeptide is Large ribosomal subunit protein eL42 (rpl36a) (Danio rerio (Zebrafish)).